The sequence spans 323 residues: Aquaporin NIP3-1 (323 aa).

Residue M1 is modified to N-acetylmethionine. 2 helical membrane passes run 45–65 (LIGEFVGTFTMIFAGCSAIVV) and 73–93 (VTLPGIALVWGLVVTVMIYSI). The NPA 1 motif lies at 102-104 (NPA). 3 helical membrane passes run 122–142 (GYIAAQLLGSTLAAAVLRLVF), 167–187 (TSFVMEFIATFNLMFVISAVA), and 196–216 (FAGIAIGATIVLDILFSGPIS). The NPA 2 motif lies at 221-223 (NPA). A helical transmembrane segment spans residues 239 to 259 (WLYIVSPVIGALSGAWTYGLL).

This sequence belongs to the MIP/aquaporin (TC 1.A.8) family. NIP (TC 1.A.8.12) subfamily.

The protein resides in the membrane. Aquaporins facilitate the transport of water and small neutral solutes across cell membranes. The protein is Aquaporin NIP3-1 (NIP3-1) of Arabidopsis thaliana (Mouse-ear cress).